The chain runs to 406 residues: ESX-5 secretion system protein EccE5 (406 aa).

The next 2 membrane-spanning stretches (helical) occupy residues 9–29 and 43–63; these read LALS…ILAV and VAWW…VVSY.

Belongs to the EccE family. As to quaternary structure, part of the ESX-5 / type VII secretion system (T7SS), which is composed of cytosolic and membrane components. The ESX-5 membrane complex is composed of EccB5, EccC5, EccD5 and EccE5.

It localises to the cell inner membrane. Functionally, part of the ESX-5 specialized secretion system, which is responsible for the secretion of EsxN and a number of PE_PGRS and PPE proteins, including PPE41. This chain is ESX-5 secretion system protein EccE5, found in Mycobacterium tuberculosis (strain ATCC 25618 / H37Rv).